Consider the following 644-residue polypeptide: Biosynthetic arginine decarboxylase (644 aa).

N6-(pyridoxal phosphate)lysine is present on lysine 105. 287 to 297 (LDVGGGLGIDY) is a substrate binding site.

Belongs to the Orn/Lys/Arg decarboxylase class-II family. SpeA subfamily. The cofactor is Mg(2+). Pyridoxal 5'-phosphate is required as a cofactor.

The enzyme catalyses L-arginine + H(+) = agmatine + CO2. Catalyzes the biosynthesis of agmatine from arginine. This Parasynechococcus marenigrum (strain WH8102) protein is Biosynthetic arginine decarboxylase.